Reading from the N-terminus, the 257-residue chain is Dihydroorotate dehydrogenase B (NAD(+)), electron transfer subunit (257 aa).

Positions 2–102 constitute an FAD-binding FR-type domain; that stretch reads IGRERMTVVS…LGPLGHGFPL (101 aa). FAD contacts are provided by residues 53 to 56, 70 to 72, and 77 to 78; these read RPLS, IYR, and GT. [2Fe-2S] cluster is bound by residues Cys221, Cys226, Cys229, and Cys244.

This sequence belongs to the PyrK family. As to quaternary structure, heterotetramer of 2 PyrK and 2 PyrD type B subunits. The cofactor is [2Fe-2S] cluster. It depends on FAD as a cofactor.

The protein operates within pyrimidine metabolism; UMP biosynthesis via de novo pathway; orotate from (S)-dihydroorotate (NAD(+) route): step 1/1. Functionally, responsible for channeling the electrons from the oxidation of dihydroorotate from the FMN redox center in the PyrD type B subunit to the ultimate electron acceptor NAD(+). This is Dihydroorotate dehydrogenase B (NAD(+)), electron transfer subunit from Geobacillus thermodenitrificans (strain NG80-2).